The primary structure comprises 172 residues: Shikimate kinase 2 (172 aa).

9 to 16 provides a ligand contact to ATP; the sequence is GARAAGKT.

It belongs to the shikimate kinase family.

It is found in the cytoplasm. It carries out the reaction shikimate + ATP = 3-phosphoshikimate + ADP + H(+). It functions in the pathway metabolic intermediate biosynthesis; chorismate biosynthesis; chorismate from D-erythrose 4-phosphate and phosphoenolpyruvate: step 5/7. This is Shikimate kinase 2 from Syntrophotalea carbinolica (strain DSM 2380 / NBRC 103641 / GraBd1) (Pelobacter carbinolicus).